Here is a 247-residue protein sequence, read N- to C-terminus: Uridylate kinase (247 aa).

15 to 18 is an ATP binding site; sequence KLSG. The tract at residues 23-28 is involved in allosteric activation by GTP; it reads GDEGFG. Residue glycine 57 participates in UMP binding. Positions 58 and 62 each coordinate ATP. UMP-binding positions include aspartate 77 and 138–145; that span reads TGNPFFTT. Threonine 165, tyrosine 171, and aspartate 174 together coordinate ATP.

It belongs to the UMP kinase family. As to quaternary structure, homohexamer.

It is found in the cytoplasm. It carries out the reaction UMP + ATP = UDP + ADP. The protein operates within pyrimidine metabolism; CTP biosynthesis via de novo pathway; UDP from UMP (UMPK route): step 1/1. Its activity is regulated as follows. Allosterically activated by GTP. Inhibited by UTP. In terms of biological role, catalyzes the reversible phosphorylation of UMP to UDP. This chain is Uridylate kinase, found in Colwellia psychrerythraea (strain 34H / ATCC BAA-681) (Vibrio psychroerythus).